Reading from the N-terminus, the 179-residue chain is Peptide deformylase (179 aa).

C102 and H144 together coordinate Fe cation. Residue E145 is part of the active site. H148 contacts Fe cation.

Belongs to the polypeptide deformylase family. It depends on Fe(2+) as a cofactor.

It catalyses the reaction N-terminal N-formyl-L-methionyl-[peptide] + H2O = N-terminal L-methionyl-[peptide] + formate. In terms of biological role, removes the formyl group from the N-terminal Met of newly synthesized proteins. Requires at least a dipeptide for an efficient rate of reaction. N-terminal L-methionine is a prerequisite for activity but the enzyme has broad specificity at other positions. This is Peptide deformylase from Wolbachia sp. subsp. Drosophila simulans (strain wRi).